The sequence spans 618 residues: tRNA endonuclease vms-1 (618 aa).

The C2H2-type zinc finger occupies 59 to 85; that stretch reads DQCTTCNCPVDFGDRAVLLEHYQSLFH. In terms of domain architecture, VLRF1 spans 170 to 311; the sequence is RPFDCAIFLW…SDCWQRLQQV (142 aa). The active site involves glutamine 213. ANK repeat units lie at residues 437–466 and 470–496; these read NRST…CDSS and GAGL…VKNE. Residues 502 to 539 are disordered; the sequence is ARTHIPEPKKKVELTEEQEREQAERKKEKKARQKEKEK. The span at 505–515 shows a compositional bias: basic and acidic residues; it reads HIPEPKKKVEL. Residues 510–557 adopt a coiled-coil conformation; it reads KKKVELTEEQEREQAERKKEKKARQKEKEKLKKEIAKRDVEEMEERQK.

It belongs to the ANKZF1/VMS1 family. As to expression, in larval stages and in adults, expressed in intestinal cells, specific neurons in the head and the tail, and in the ventral nerve cord.

It localises to the cytoplasm. The protein localises to the mitochondrion. Endonuclease that cleaves polypeptidyl-tRNAs downstream of the ribosome-associated quality control (RQC) pathway to release incompletely synthesized polypeptides for degradation. The RQC pathway disassembles aberrantly stalled translation complexes to recycle or degrade the constituent parts. Dispensable for viability and growth but is required for protection against oxidative stress and for wild-type life span. The polypeptide is tRNA endonuclease vms-1 (vms-1) (Caenorhabditis elegans).